We begin with the raw amino-acid sequence, 203 residues long: Guanylate kinase (203 aa).

Residues 3-181 (GTLYVVSAPS…TLADLQAIFT (179 aa)) form the Guanylate kinase-like domain. 10–17 (APSGAGKT) contacts ATP.

This sequence belongs to the guanylate kinase family.

The protein resides in the cytoplasm. It carries out the reaction GMP + ATP = GDP + ADP. In terms of biological role, essential for recycling GMP and indirectly, cGMP. The sequence is that of Guanylate kinase from Alkalilimnicola ehrlichii (strain ATCC BAA-1101 / DSM 17681 / MLHE-1).